Here is a 242-residue protein sequence, read N- to C-terminus: UPF0246 protein SP70585_1589 (242 aa).

Belongs to the UPF0246 family.

This Streptococcus pneumoniae (strain 70585) protein is UPF0246 protein SP70585_1589.